Consider the following 129-residue polypeptide: Small ribosomal subunit protein uS11 (129 aa).

It belongs to the universal ribosomal protein uS11 family. In terms of assembly, part of the 30S ribosomal subunit. Interacts with proteins S7 and S18. Binds to IF-3.

Its function is as follows. Located on the platform of the 30S subunit, it bridges several disparate RNA helices of the 16S rRNA. Forms part of the Shine-Dalgarno cleft in the 70S ribosome. This is Small ribosomal subunit protein uS11 from Photobacterium profundum (strain SS9).